We begin with the raw amino-acid sequence, 194 residues long: Putative L,D-transpeptidase YciB (194 aa).

The signal sequence occupies residues 1–19 (MKLSLFIIAVLMPVILLSA). C20 carries the N-palmitoyl cysteine lipid modification. A lipid anchor (S-diacylglycerol cysteine) is attached at C20. Residues 68–194 (VWIDVNVKEQ…IPEHTKVVIS (127 aa)) enclose the L,D-TPase catalytic domain. H144 acts as the Proton donor/acceptor in catalysis. C170 acts as the Nucleophile in catalysis.

It belongs to the YkuD family.

The protein resides in the cell membrane. Its pathway is cell wall biogenesis; peptidoglycan biosynthesis. This is Putative L,D-transpeptidase YciB (yciB) from Bacillus subtilis (strain 168).